The primary structure comprises 399 residues: Formaldehyde dismutase (399 aa).

Residue Cys46 participates in Zn(2+) binding. 47–51 (GSDQH) is a binding site for NAD(+). Zn(2+)-binding residues include His67, Cys97, Cys100, Cys103, Cys111, and Asp170. Thr174 contributes to the NAD(+) binding site. Position 177 (His177) interacts with Zn(2+). NAD(+) is bound by residues 197-198 (PV), 218-219 (DQ), Arg223, Val263, His268, Pro299, 299-301 (PGI), and 336-338 (GMA).

This sequence belongs to the zinc-containing alcohol dehydrogenase family. In terms of assembly, homotetramer. Zn(2+) is required as a cofactor. NAD(+) serves as cofactor. Requires NADH as cofactor.

The catalysed reaction is 2 formaldehyde + H2O = methanol + formate + H(+). With respect to regulation, inhibited by the substrate analog pyrazole but not by NAD analogs such as AMP, ADP, ATP or N-methylnicotinamide chloride. Its function is as follows. Active against a range of primary alcohols as well as some secondary alcohols. Exhibits higher activity against alcohols with longer carbon chains. The protein is Formaldehyde dismutase of Pseudomonas putida (Arthrobacter siderocapsulatus).